The chain runs to 390 residues: MSAAIVNAVKQCGYFNQGQCLSCRHIQQPLAQQVAVKTQTLQQLLAPFIPANSAELFLPPITGDDSGFRNKAKMVVLGAAHEPVLGIVSPSGEAVDLCDCLLYPGDMQALLHRLTRFVQQAGLPPYRVDKAKGELKFILLTRSQVRGEYLLRFVLRSHNGIERIERELPALLAEYPQIKVVSVNIQPIHMAILEGDEEIFLTENTRLEERFNHVPLFIRPKSFFQTNPQVAAQLYQTARDWVAEFSPRSLWDLFCGVGGFGLHCASNDITLTGIEIEAEAIACAQMSAQMMGLENVQFMALDSTDFAKGKSAADKPDLIIVNPPRRGIGEALCQSLSEFAPKAILYSSCNPKTLAKDLEHIQGYHLTKVQLFDLFPHTDHFEVLAMLVKD.

Cys-12, Cys-20, Cys-23, and Cys-100 together coordinate [4Fe-4S] cluster. Residues Gln-225, Phe-254, Glu-275, and Asn-322 each coordinate S-adenosyl-L-methionine. The active-site Nucleophile is the Cys-349.

It belongs to the class I-like SAM-binding methyltransferase superfamily. RNA M5U methyltransferase family. RlmC subfamily.

The catalysed reaction is uridine(747) in 23S rRNA + S-adenosyl-L-methionine = 5-methyluridine(747) in 23S rRNA + S-adenosyl-L-homocysteine + H(+). Its function is as follows. Catalyzes the formation of 5-methyl-uridine at position 747 (m5U747) in 23S rRNA. The protein is 23S rRNA (uracil(747)-C(5))-methyltransferase RlmC of Shewanella baltica (strain OS185).